A 96-amino-acid chain; its full sequence is Large ribosomal subunit protein eL43 (96 aa).

The C4-type zinc finger occupies cysteine 41–cysteine 62.

Belongs to the eukaryotic ribosomal protein eL43 family. Zn(2+) serves as cofactor.

The polypeptide is Large ribosomal subunit protein eL43 (Methanococcus maripaludis (strain C6 / ATCC BAA-1332)).